Here is a 453-residue protein sequence, read N- to C-terminus: F-box protein SKIP14 (453 aa).

An F-box; degenerate domain is found at 34-104; the sequence is RKNTGGDASS…NRQQLFAGLS (71 aa).

As to quaternary structure, part of a SCF (ASK-cullin-F-box) protein ligase complex. Interacts with CUL1, SKP1A/ASK1 and SPK1B/ASK2.

It functions in the pathway protein modification; protein ubiquitination. Functionally, component of SCF(ASK-cullin-F-box) E3 ubiquitin ligase complexes, which may mediate the ubiquitination and subsequent proteasomal degradation of target proteins. In Arabidopsis thaliana (Mouse-ear cress), this protein is F-box protein SKIP14 (SKIP14).